The primary structure comprises 224 residues: Thiamine-phosphate synthase (224 aa).

4-amino-2-methyl-5-(diphosphooxymethyl)pyrimidine-binding positions include 44–48 (QFREK) and Asn79. Residues Asp80 and Asp99 each contribute to the Mg(2+) site. A 4-amino-2-methyl-5-(diphosphooxymethyl)pyrimidine-binding site is contributed by Ser117. Residue 143–145 (TST) participates in 2-[(2R,5Z)-2-carboxy-4-methylthiazol-5(2H)-ylidene]ethyl phosphate binding. Lys146 provides a ligand contact to 4-amino-2-methyl-5-(diphosphooxymethyl)pyrimidine. 2-[(2R,5Z)-2-carboxy-4-methylthiazol-5(2H)-ylidene]ethyl phosphate contacts are provided by residues Gly175 and 195 to 196 (IS).

This sequence belongs to the thiamine-phosphate synthase family. The cofactor is Mg(2+).

The catalysed reaction is 2-[(2R,5Z)-2-carboxy-4-methylthiazol-5(2H)-ylidene]ethyl phosphate + 4-amino-2-methyl-5-(diphosphooxymethyl)pyrimidine + 2 H(+) = thiamine phosphate + CO2 + diphosphate. It catalyses the reaction 2-(2-carboxy-4-methylthiazol-5-yl)ethyl phosphate + 4-amino-2-methyl-5-(diphosphooxymethyl)pyrimidine + 2 H(+) = thiamine phosphate + CO2 + diphosphate. It carries out the reaction 4-methyl-5-(2-phosphooxyethyl)-thiazole + 4-amino-2-methyl-5-(diphosphooxymethyl)pyrimidine + H(+) = thiamine phosphate + diphosphate. It functions in the pathway cofactor biosynthesis; thiamine diphosphate biosynthesis; thiamine phosphate from 4-amino-2-methyl-5-diphosphomethylpyrimidine and 4-methyl-5-(2-phosphoethyl)-thiazole: step 1/1. Its function is as follows. Condenses 4-methyl-5-(beta-hydroxyethyl)thiazole monophosphate (THZ-P) and 2-methyl-4-amino-5-hydroxymethyl pyrimidine pyrophosphate (HMP-PP) to form thiamine monophosphate (TMP). The protein is Thiamine-phosphate synthase of Bacillus cereus (strain ATCC 10987 / NRS 248).